The primary structure comprises 110 residues: MSDTFQRIAPEQARQLRENGAQVVDIRDPQSYALGHISGSRHIDNHSVVDFIAAADLDAPLVVVCYHGNSSQSAAAYFIQQGFSDVYSLDGGFELWRSVYPADTSTGEAE.

One can recognise a Rhodanese domain in the interval 17 to 105 (RENGAQVVDI…WRSVYPADTS (89 aa)). The active-site Cysteine persulfide intermediate is cysteine 65.

The protein belongs to the GlpE family.

It is found in the cytoplasm. The catalysed reaction is thiosulfate + hydrogen cyanide = thiocyanate + sulfite + 2 H(+). It catalyses the reaction thiosulfate + [thioredoxin]-dithiol = [thioredoxin]-disulfide + hydrogen sulfide + sulfite + 2 H(+). Transferase that catalyzes the transfer of sulfur from thiosulfate to thiophilic acceptors such as cyanide or dithiols. May function in a CysM-independent thiosulfate assimilation pathway by catalyzing the conversion of thiosulfate to sulfite, which can then be used for L-cysteine biosynthesis. This chain is Thiosulfate sulfurtransferase GlpE, found in Pseudomonas paraeruginosa (strain DSM 24068 / PA7) (Pseudomonas aeruginosa (strain PA7)).